A 74-amino-acid polypeptide reads, in one-letter code: Lambda-hexatoxin-Hv1e (74 aa).

Residues 1-22 (MNTATCFIVLLVVATVIGGIEA) form the signal peptide. Residues 23–35 (GEFDMRKDVMGLF) constitute a propeptide that is removed on maturation. Intrachain disulfides connect Cys-40/Cys-54, Cys-47/Cys-59, Cys-50/Cys-51, and Cys-53/Cys-69.

Belongs to the neurotoxin 11 (kappa toxin) family. In terms of tissue distribution, expressed by the venom gland.

The protein localises to the secreted. Functionally, this excitatory toxin inhibits insect calcium-activated potassium (KCa) channels (Slo-type). The chain is Lambda-hexatoxin-Hv1e from Hadronyche versuta (Blue mountains funnel-web spider).